Consider the following 220-residue polypeptide: NADH-quinone oxidoreductase subunit I (220 aa).

4Fe-4S ferredoxin-type domains are found at residues 71-102 and 112-141; these read LQRL…IITH and DSYT…MGNR. [4Fe-4S] cluster-binding residues include Cys-82, Cys-85, Cys-88, Cys-92, Cys-121, Cys-124, Cys-127, and Cys-131. The disordered stretch occupies residues 187–220; it reads MQATPLDYVQEPSKEESKEESPTSPESHKGDENV. Residues 198-220 are compositionally biased toward basic and acidic residues; it reads PSKEESKEESPTSPESHKGDENV.

Belongs to the complex I 23 kDa subunit family. In terms of assembly, NDH-1 is composed of 14 different subunits. Subunits NuoA, H, J, K, L, M, N constitute the membrane sector of the complex. Requires [4Fe-4S] cluster as cofactor.

It localises to the cell inner membrane. It carries out the reaction a quinone + NADH + 5 H(+)(in) = a quinol + NAD(+) + 4 H(+)(out). In terms of biological role, NDH-1 shuttles electrons from NADH, via FMN and iron-sulfur (Fe-S) centers, to quinones in the respiratory chain. The immediate electron acceptor for the enzyme in this species is believed to be ubiquinone. Couples the redox reaction to proton translocation (for every two electrons transferred, four hydrogen ions are translocated across the cytoplasmic membrane), and thus conserves the redox energy in a proton gradient. In Helicobacter pylori (strain J99 / ATCC 700824) (Campylobacter pylori J99), this protein is NADH-quinone oxidoreductase subunit I.